We begin with the raw amino-acid sequence, 147 residues long: Large ribosomal subunit protein uL11 (147 aa).

Belongs to the universal ribosomal protein uL11 family. As to quaternary structure, part of the ribosomal stalk of the 50S ribosomal subunit. Interacts with L10 and the large rRNA to form the base of the stalk. L10 forms an elongated spine to which L12 dimers bind in a sequential fashion forming a multimeric L10(L12)X complex. In terms of processing, one or more lysine residues are methylated.

Functionally, forms part of the ribosomal stalk which helps the ribosome interact with GTP-bound translation factors. The polypeptide is Large ribosomal subunit protein uL11 (Bacteroides thetaiotaomicron (strain ATCC 29148 / DSM 2079 / JCM 5827 / CCUG 10774 / NCTC 10582 / VPI-5482 / E50)).